The sequence spans 188 residues: NAD(P)H-quinone oxidoreductase subunit J (188 aa).

The protein belongs to the complex I 30 kDa subunit family. NDH-1 can be composed of about 15 different subunits; different subcomplexes with different compositions have been identified which probably have different functions.

The protein localises to the cellular thylakoid membrane. It catalyses the reaction a plastoquinone + NADH + (n+1) H(+)(in) = a plastoquinol + NAD(+) + n H(+)(out). The enzyme catalyses a plastoquinone + NADPH + (n+1) H(+)(in) = a plastoquinol + NADP(+) + n H(+)(out). NDH-1 shuttles electrons from an unknown electron donor, via FMN and iron-sulfur (Fe-S) centers, to quinones in the respiratory and/or the photosynthetic chain. The immediate electron acceptor for the enzyme in this species is believed to be plastoquinone. Couples the redox reaction to proton translocation, and thus conserves the redox energy in a proton gradient. Cyanobacterial NDH-1 also plays a role in inorganic carbon-concentration. The protein is NAD(P)H-quinone oxidoreductase subunit J of Parasynechococcus marenigrum (strain WH8102).